The chain runs to 718 residues: Nucleolar protein 11 (718 aa).

Lysine 346 carries the N6-methyllysine modification.

Interacts with UTP4. Interacts with FBL/fibrillarin in a transcription-dependent manner. May associate with the proposed t-UTP subcomplex of the SSU processome containing at least UTP4, WDR43, HEATR1, UTP15, WDR75.

The protein resides in the nucleus. Its subcellular location is the nucleolus. In terms of biological role, ribosome biogenesis factor. May be required for both optimal rDNA transcription and small subunit (SSU) pre-rRNA processing at sites A', A0, 1 and 2b. This Pongo abelii (Sumatran orangutan) protein is Nucleolar protein 11 (NOL11).